The primary structure comprises 545 residues: 1,3-beta-glucanosyltransferase ARB_07487 (545 aa).

The signal sequence occupies residues 1-19; it reads MKFSSLAAATALVAGSVVA. N-linked (GlcNAc...) asparagine glycans are attached at residues Asn51 and Asn69. Cys88 and Cys117 are joined by a disulfide. (1,3-beta-D-glucosyl)n contacts are provided by residues Tyr106, 133-141, Asn174, and Glu175; that span reads SEPSTSIIR. The active-site Proton donor is Glu175. N-linked (GlcNAc...) asparagine glycosylation is present at Asn179. The (1,3-beta-D-glucosyl)n site is built by Asp216 and Arg221. 5 cysteine pairs are disulfide-bonded: Cys230/Cys363, Cys248/Cys279, Cys384/Cys437, Cys393/Cys464, and Cys412/Cys419. Glu276 functions as the Nucleophile in the catalytic mechanism. Tyr308 lines the (1,3-beta-D-glucosyl)n pocket. The interval 493–513 is disordered; it reads GTGSVTSAPGSGGNKPDQGAA. Ala512 is lipidated: GPI-anchor amidated alanine. The propeptide at 513 to 545 is removed in mature form; that stretch reads ASTISAPSVNLGIVKLGAYIFCAVLAGAGMILI.

This sequence belongs to the glycosyl hydrolase 72 family. Post-translationally, the GPI-anchor is attached to the protein in the endoplasmic reticulum and serves to target the protein to the cell surface. There, the glucosamine-inositol phospholipid moiety is cleaved off and the GPI-modified mannoprotein is covalently attached via its lipidless GPI glycan remnant to the 1,6-beta-glucan of the outer cell wall layer.

Its subcellular location is the secreted. It is found in the cell membrane. The protein resides in the cell wall. In terms of biological role, splits internally a 1,3-beta-glucan molecule and transfers the newly generated reducing end (the donor) to the non-reducing end of another 1,3-beta-glucan molecule (the acceptor) forming a 1,3-beta linkage, resulting in the elongation of 1,3-beta-glucan chains in the cell wall. Involved in cell wall biosynthesis and morphogenesis. The protein is 1,3-beta-glucanosyltransferase ARB_07487 of Arthroderma benhamiae (strain ATCC MYA-4681 / CBS 112371) (Trichophyton mentagrophytes).